A 162-amino-acid polypeptide reads, in one-letter code: Phospholipase A and acyltransferase 3 (162 aa).

At 1 to 133 the chain is on the cytoplasmic side; that stretch reads MLAPIPEPKP…VPRSDQVRDA (133 aa). The 117-residue stretch at 13–129 folds into the LRAT domain; it reads LIEIFRPMYR…LRYGVPRSDQ (117 aa). Catalysis depends on residues H23 and H35. C113 serves as the catalytic Acyl-thioester intermediate. The chain crosses the membrane as a helical span at residues 134–154; it reads VKAVGIAGVGLAALGLVGVML. Over 155–162 the chain is Lumenal; it reads SRNKKQKQ.

Belongs to the H-rev107 family. Interacts with PPP2R1A; this interaction might decrease PP2A activity. In terms of tissue distribution, ubiquitously expressed in normal tissues but down-regulated in primary carcinomas or in many cell lines derived from tumors. Highly expressed in white adipose tissue and in adipocytes. Expressed at lower levels in brown adipose tissue.

Its subcellular location is the cell membrane. It localises to the cytoplasm. The protein localises to the cytosol. It is found in the perinuclear region. The protein resides in the peroxisome membrane. Its subcellular location is the mitochondrion membrane. It localises to the nucleus envelope. The protein localises to the lysosome membrane. It is found in the endoplasmic reticulum membrane. The enzyme catalyses a 1,2-diacyl-sn-glycero-3-phosphocholine + H2O = a 1-acyl-sn-glycero-3-phosphocholine + a fatty acid + H(+). The catalysed reaction is a 1,2-diacyl-sn-glycero-3-phosphocholine + H2O = a 2-acyl-sn-glycero-3-phosphocholine + a fatty acid + H(+). It catalyses the reaction 1,2-dihexadecanoyl-sn-glycero-3-phosphocholine + H2O = 1-hexadecanoyl-sn-glycero-3-phosphocholine + hexadecanoate + H(+). It carries out the reaction 1,2-dihexadecanoyl-sn-glycero-3-phosphocholine + H2O = 2-hexadecanoyl-sn-glycero-3-phosphocholine + hexadecanoate + H(+). The enzyme catalyses 1-hexadecanoyl-2-(9Z-octadecenoyl)-sn-glycero-3-phosphocholine + H2O = 2-(9Z-octadecenoyl)-sn-glycero-3-phosphocholine + hexadecanoate + H(+). The catalysed reaction is 1-hexadecanoyl-2-(9Z-octadecenoyl)-sn-glycero-3-phosphocholine + H2O = 1-hexadecanoyl-sn-glycero-3-phosphocholine + (9Z)-octadecenoate + H(+). It catalyses the reaction 1-hexadecanoyl-2-(5Z,8Z,11Z,14Z-eicosatetraenoyl)-sn-glycero-3-phosphocholine + H2O = 1-hexadecanoyl-sn-glycero-3-phosphocholine + (5Z,8Z,11Z,14Z)-eicosatetraenoate + H(+). It carries out the reaction 1-hexadecanoyl-2-(5Z,8Z,11Z,14Z-eicosatetraenoyl)-sn-glycero-3-phosphocholine + H2O = 2-(5Z,8Z,11Z,14Z)-eicosatetraenoyl-sn-glycero-3-phosphocholine + hexadecanoate + H(+). The enzyme catalyses 1-hexadecanoyl-2-(9Z,12Z-octadecadienoyl)-sn-glycero-3-phosphoethanolamine + H2O = 1-hexadecanoyl-sn-glycero-3-phosphoethanolamine + (9Z,12Z)-octadecadienoate + H(+). The catalysed reaction is 1-hexadecanoyl-2-(9Z,12Z-octadecadienoyl)-sn-glycero-3-phosphoethanolamine + H2O = 2-(9Z,12Z)-octadecadienoyl-sn-glycero-3-phosphoethanolamine + hexadecanoate + H(+). It catalyses the reaction 1-hexadecanoyl-2-(5Z,8Z,11Z,14Z-eicosatetraenoyl)-sn-glycero-3-phosphoethanolamine + H2O = 1-hexadecanoyl-sn-glycero-3-phosphoethanolamine + (5Z,8Z,11Z,14Z)-eicosatetraenoate + H(+). It carries out the reaction 1-hexadecanoyl-2-(5Z,8Z,11Z,14Z-eicosatetraenoyl)-sn-glycero-3-phosphoethanolamine + H2O = 2-(5Z,8Z,11Z,14Z)-eicosatetraenoyl-sn-glycero-3-phosphoethanolamine + hexadecanoate + H(+). The enzyme catalyses 1-hexanoyl-2-acyl-sn-glycero-3-phosphocholine + H2O = hexanoate + a 2-acyl-sn-glycero-3-phosphocholine + H(+). The catalysed reaction is 1-hexanoyl-2-acyl-sn-glycero-3-phosphocholine + H2O = 1-hexanoyl-sn-glycero-3-phosphocholine + a fatty acid + H(+). It catalyses the reaction 1,2-diheptadecanoyl-sn-glycero-3-phosphoethanolamine + 1-(9Z-octadecenoyl)-2-hexadecanoyl-sn-glycero-3-phosphocholine = 1,2-diheptadecanoyl-sn-glycero-3-phospho-N-hexadecanoyl-ethanolamine + 1-(9Z-octadecenoyl)-sn-glycero-3-phosphocholine + H(+). It carries out the reaction 1,2-diheptadecanoyl-sn-glycero-3-phosphoethanolamine + 1-(9Z-octadecenoyl)-2-hexadecanoyl-sn-glycero-3-phosphocholine = 1,2-diheptadecanoyl-sn-glycero-3-phospho-N-(9Z-octadecenoyl)-ethanolamine + 2-hexadecanoyl-sn-glycero-3-phosphocholine + H(+). The enzyme catalyses 1,2-dihexanoyl-sn-glycero-3-phosphoethanolamine + 2-heptanoyl-sn-glycero-3-phosphocholine = hexanoyl-sn-glycero-3-phosphoethanolamine + 1-hexanoyl-2-heptanoyl-sn-glycero-3-phosphocholine. The catalysed reaction is 1-hexadecanoyl-2-octadecanoyl-sn-glycero-3-phosphocholine + H2O = octadecanoate + 1-hexadecanoyl-sn-glycero-3-phosphocholine + H(+). It catalyses the reaction 1-hexadecanoyl-2-octadecanoyl-sn-glycero-3-phosphocholine + H2O = 2-octadecanoyl-sn-glycero-3-phosphocholine + hexadecanoate + H(+). It carries out the reaction 1-octadecanoyl-2-hexadecanoyl-sn-glycero-3-phosphocholine + H2O = 1-octadecanoyl-sn-glycero-3-phosphocholine + hexadecanoate + H(+). The enzyme catalyses 1-octadecanoyl-2-hexadecanoyl-sn-glycero-3-phosphocholine + H2O = 2-hexadecanoyl-sn-glycero-3-phosphocholine + octadecanoate + H(+). The catalysed reaction is 1-hexadecanoyl-2-(9Z,12Z-octadecadienoyl)-sn-glycero-3-phosphocholine + H2O = (9Z,12Z)-octadecadienoate + 1-hexadecanoyl-sn-glycero-3-phosphocholine + H(+). It catalyses the reaction 1-hexadecanoyl-2-(9Z,12Z-octadecadienoyl)-sn-glycero-3-phosphocholine + H2O = 2-(9Z,12Z-octadecadienoyl)-sn-glycero-3-phosphocholine + hexadecanoate + H(+). It carries out the reaction 1,2-di-(9Z-octadecenoyl)-sn-glycero-3-phosphocholine + H2O = 2-(9Z-octadecenoyl)-sn-glycero-3-phosphocholine + (9Z)-octadecenoate + H(+). The enzyme catalyses 1,2-dihexadecanoyl-sn-glycero-3-phosphocholine + H2O = hexadecanoyl-sn-glycero-3-phosphocholine + hexadecanoate + H(+). The catalysed reaction is 1,2-di-(9Z-octadecenoyl)-sn-glycero-3-phosphocholine + H2O = 1-(9Z-octadecenoyl)-sn-glycero-3-phosphocholine + (9Z)-octadecenoate + H(+). It catalyses the reaction 1,2-di-(9Z-octadecenoyl)-sn-glycero-3-phosphoethanolamine + 1,2-dihexadecanoyl-sn-glycero-3-phosphocholine = hexadecanoyl-sn-glycero-3-phosphocholine + N-hexadecanoyl-1,2-di-(9Z-octadecenoyl)-sn-glycero-3-phosphoethanolamine + H(+). It carries out the reaction 1,2-di-(9Z,12Z-octadecadienoyl)-sn-glycero-3-phosphocholine + H2O = 1-(9Z,12Z)-octadecadienoyl-sn-glycero-3-phosphocholine + (9Z,12Z)-octadecadienoate + H(+). Functionally, exhibits both phospholipase A1/2 and acyltransferase activities. Shows phospholipase A1 (PLA1) and A2 (PLA2), catalyzing the calcium-independent release of fatty acids from the sn-1 or sn-2 position of glycerophospholipids. For most substrates, PLA1 activity is much higher than PLA2 activity. Shows O-acyltransferase activity, catalyzing the transfer of a fatty acyl group from glycerophospholipid to the hydroxyl group of lysophospholipid. Shows N-acyltransferase activity,catalyzing the calcium-independent transfer of a fatty acyl group at the sn-1 position of phosphatidylcholine (PC) and other glycerophospholipids to the primary amine of phosphatidylethanolamine (PE), forming N-acylphosphatidylethanolamine (NAPE), which serves as precursor for N-acylethanolamines (NAEs). Exhibits high N-acyltransferase activity and low phospholipase A1/2 activity. Required for complete organelle rupture and degradation that occur during eye lens terminal differentiation, when fiber cells that compose the lens degrade all membrane-bound organelles in order to provide lens with transparency to allow the passage of light. Organelle membrane degradation is probably catalyzed by the phospholipase activity. Its function is as follows. (Microbial infection) Acts as a host factor for picornaviruses: required during early infection to promote viral genome release into the cytoplasm. This chain is Phospholipase A and acyltransferase 3, found in Mus musculus (Mouse).